The following is a 119-amino-acid chain: Large ribosomal subunit protein bL20 (119 aa).

This sequence belongs to the bacterial ribosomal protein bL20 family.

Functionally, binds directly to 23S ribosomal RNA and is necessary for the in vitro assembly process of the 50S ribosomal subunit. It is not involved in the protein synthesizing functions of that subunit. The polypeptide is Large ribosomal subunit protein bL20 (Metamycoplasma arthritidis (strain 158L3-1) (Mycoplasma arthritidis)).